Here is a 381-residue protein sequence, read N- to C-terminus: Cytochrome b (381 aa).

The next 4 membrane-spanning stretches (helical) occupy residues 33 to 53, 77 to 98, 113 to 133, and 178 to 198; these read FGSLLGICLVIQILTGLFLAM, WLIRNLHANGASMFFMCLFLHV, WNIGVMLLLTVTATAFVGYVL, and FFALHFLLPFVIAGLTLVHLT. Heme b contacts are provided by His-83 and His-97. Positions 182 and 196 each coordinate heme b. His-201 provides a ligand contact to a ubiquinone. The next 4 membrane-spanning stretches (helical) occupy residues 226-246, 288-308, 320-340, and 347-367; these read IKDILGLMFLLLVLLSLALFS, LGGVLALLASILILLVIPFLH, ISQTLFWILTANLITLTWIGG, and FIIIGQPASILYFPLIHHPMP.

Belongs to the cytochrome b family. In terms of assembly, the cytochrome bc1 complex contains 11 subunits: 3 respiratory subunits (MT-CYB, CYC1 and UQCRFS1), 2 core proteins (UQCRC1 and UQCRC2) and 6 low-molecular weight proteins (UQCRH/QCR6, UQCRB/QCR7, UQCRQ/QCR8, UQCR10/QCR9, UQCR11/QCR10 and a cleavage product of UQCRFS1). This cytochrome bc1 complex then forms a dimer. It depends on heme b as a cofactor.

The protein resides in the mitochondrion inner membrane. Its function is as follows. Component of the ubiquinol-cytochrome c reductase complex (complex III or cytochrome b-c1 complex) that is part of the mitochondrial respiratory chain. The b-c1 complex mediates electron transfer from ubiquinol to cytochrome c. Contributes to the generation of a proton gradient across the mitochondrial membrane that is then used for ATP synthesis. The polypeptide is Cytochrome b (MT-CYB) (Sminthopsis youngsoni (Lesser hairy-footed dunnart)).